The primary structure comprises 428 residues: Light-independent protochlorophyllide reductase subunit N (428 aa).

[4Fe-4S] cluster is bound by residues C29, C54, and C115.

Belongs to the BchN/ChlN family. In terms of assembly, protochlorophyllide reductase is composed of three subunits; BchL, BchN and BchB. Forms a heterotetramer of two BchB and two BchN subunits. It depends on [4Fe-4S] cluster as a cofactor.

It carries out the reaction chlorophyllide a + oxidized 2[4Fe-4S]-[ferredoxin] + 2 ADP + 2 phosphate = protochlorophyllide a + reduced 2[4Fe-4S]-[ferredoxin] + 2 ATP + 2 H2O. It participates in porphyrin-containing compound metabolism; bacteriochlorophyll biosynthesis (light-independent). In terms of biological role, component of the dark-operative protochlorophyllide reductase (DPOR) that uses Mg-ATP and reduced ferredoxin to reduce ring D of protochlorophyllide (Pchlide) to form chlorophyllide a (Chlide). This reaction is light-independent. The NB-protein (BchN-BchB) is the catalytic component of the complex. This is Light-independent protochlorophyllide reductase subunit N from Cereibacter sphaeroides (strain KD131 / KCTC 12085) (Rhodobacter sphaeroides).